The sequence spans 428 residues: Histidine--tRNA ligase (428 aa).

The protein belongs to the class-II aminoacyl-tRNA synthetase family. Homodimer.

It localises to the cytoplasm. It catalyses the reaction tRNA(His) + L-histidine + ATP = L-histidyl-tRNA(His) + AMP + diphosphate + H(+). The polypeptide is Histidine--tRNA ligase (Lactobacillus helveticus (strain DPC 4571)).